A 353-amino-acid polypeptide reads, in one-letter code: Mas-related G-protein coupled receptor member B5 (353 aa).

Residues 1-67 (MPDSPTESYG…SCIITFNTLN (67 aa)) are Extracellular-facing. Residues asparagine 26 and asparagine 44 are each glycosylated (N-linked (GlcNAc...) asparagine). The chain crosses the membrane as a helical span at residues 68-90 (FLTATISVVGTAGNATVLRLLGF). Over 91-96 (HMHRYA) the chain is Cytoplasmic. A helical membrane pass occupies residues 97 to 117 (FSVYVFNLAGADFLYLCTQTV). Topologically, residues 118-131 (YSLECVLQFDNSYF) are extracellular. A helical membrane pass occupies residues 132–152 (YFLLTILMFAYLAALCMIPAI). Residues 153 to 180 (STERCLSVTWPIWYHCQRPRHTSATVCA) lie on the Cytoplasmic side of the membrane. Residues 181–201 (LFWAFSLLLRLLLGQGCGFLF) traverse the membrane as a helical segment. Residues 202 to 213 (GKYDYYFCRYCS) lie on the Extracellular side of the membrane. A helical transmembrane segment spans residues 214–234 (FITTAFLIVLFVVPFVSSLAM). The Cytoplasmic portion of the chain corresponds to 235–253 (LTKIICGSHRIPVTRFYVT). The helical transmembrane segment at 254 to 274 (IAVTVLVFTFFGLPVGIISLL) threads the bilayer. Residues 275 to 289 (LPRIVVFRGVFYIYK) are Extracellular-facing. The chain crosses the membrane as a helical span at residues 290–310 (IVTFLYSVNCCANPIIYFLIG). Over 311–353 (SIRHHRLQRQSLKLLLQRAMQDTPEEEGGVKGPSQKSNELEIV) the chain is Cytoplasmic. The disordered stretch occupies residues 333–353 (TPEEEGGVKGPSQKSNELEIV).

This sequence belongs to the G-protein coupled receptor 1 family. Mas subfamily. As to expression, expressed strongly in newborn dorsal root ganglia, adult dorsal root ganglia and trigeminal ganlia.

The protein resides in the membrane. Its function is as follows. Orphan receptor. Probably involved in the function of nociceptive neurons. May regulate nociceptor function and/or development, including the sensation or modulation of pain. This is Mas-related G-protein coupled receptor member B5 (Mrgprb5) from Rattus norvegicus (Rat).